A 441-amino-acid polypeptide reads, in one-letter code: Ribulose bisphosphate carboxylase large chain (441 aa).

Residue Lys-5 is modified to N6,N6,N6-trimethyllysine. Thr-164 contributes to the substrate binding site. Lys-166 (proton acceptor) is an active-site residue. Residue Lys-168 participates in substrate binding. Positions 192, 194, and 195 each coordinate Mg(2+). Lys-192 bears the N6-carboxylysine mark. Residue His-285 is the Proton acceptor of the active site. Substrate contacts are provided by Arg-286, His-318, and Ser-370.

This sequence belongs to the RuBisCO large chain family. Type I subfamily. In terms of assembly, heterohexadecamer of 8 large chains and 8 small chains; disulfide-linked. The disulfide link is formed within the large subunit homodimers. It depends on Mg(2+) as a cofactor. The disulfide bond which can form in the large chain dimeric partners within the hexadecamer appears to be associated with oxidative stress and protein turnover.

Its subcellular location is the plastid. It is found in the chloroplast. The enzyme catalyses 2 (2R)-3-phosphoglycerate + 2 H(+) = D-ribulose 1,5-bisphosphate + CO2 + H2O. It catalyses the reaction D-ribulose 1,5-bisphosphate + O2 = 2-phosphoglycolate + (2R)-3-phosphoglycerate + 2 H(+). RuBisCO catalyzes two reactions: the carboxylation of D-ribulose 1,5-bisphosphate, the primary event in carbon dioxide fixation, as well as the oxidative fragmentation of the pentose substrate in the photorespiration process. Both reactions occur simultaneously and in competition at the same active site. In Hemionitis engywookii (Fendler's false cloak fern), this protein is Ribulose bisphosphate carboxylase large chain.